We begin with the raw amino-acid sequence, 178 residues long: MKKLLIVTMLFTLALSAQAQWYVQGDLGASKIDITHVNSSNSPSFTQRISVGYAFDKNFRLAVDYTNYGKVTANYADVVDVSLKGKSLGLTGFYDFDLADFKPYVGVRVSTNGADVTANARYYRIEAFATETRIGIGALAGVQYKLTDNVALNTNIEYNRLASNVSDVGVKAGLRFSF.

Positions 1–19 (MKKLLIVTMLFTLALSAQA) are cleaved as a signal peptide.

It belongs to the opacity porin family.

This is an uncharacterized protein from Haemophilus influenzae (strain ATCC 51907 / DSM 11121 / KW20 / Rd).